The primary structure comprises 444 residues: D(2) dopamine receptor (444 aa).

Residues 1-37 (MDPLNLSWYDDDPESRNWSRPFNGSEGKADRPPYNYY) lie on the Extracellular side of the membrane. Asn-5, Asn-17, and Asn-23 each carry an N-linked (GlcNAc...) asparagine glycan. The chain crosses the membrane as a helical span at residues 38–60 (AMLLTLLIFVIVFGNVLVCMAVS). The Cytoplasmic segment spans residues 61–70 (REKALQTTTN). A helical membrane pass occupies residues 71 to 93 (YLIVSLAVADLLVATLVMPWVVY). At 94–108 (LEVVGEWKFSRIHCD) the chain is on the extracellular side. A disulfide bridge links Cys-107 with Cys-182. Residues 109–130 (IFVTLDVMMCTASILNLCAISI) traverse the membrane as a helical segment. The Cytoplasmic portion of the chain corresponds to 131–151 (DRYTAVAMPMLYNTRYSSKRR). The chain crosses the membrane as a helical span at residues 152–172 (VTVMIAIVWVLSFTISCPMLF). Over 173–188 (GLNNTDQNECIIANPA) the chain is Extracellular. Residues 189–213 (FVVYSSIVSFYVPFIVTLLVYIKIY) traverse the membrane as a helical segment. Residues 211–374 (KIYIVLRRRR…SQQKEKKATQ (164 aa)) are interaction with PPP1R9B. Topologically, residues 214-374 (IVLRRRRKRV…SQQKEKKATQ (161 aa)) are cytoplasmic. Residues 281 to 332 (MEMLSSTSPPERTRYSPIPPSHHQLTLPDPSHHGLHSTPDSPAKPEKNGHAK) form a disordered region. Residues 375-396 (MLAIVLGVFIICWLPFFITHIL) form a helical membrane-spanning segment. Residues 397–410 (NIHCDCNIPPVLYS) are Extracellular-facing. Residues Cys-400 and Cys-402 are joined by a disulfide bond. Residues 411-432 (AFTWLGYVNSAVNPIIYTTFNI) form a helical membrane-spanning segment. The Cytoplasmic portion of the chain corresponds to 433 to 444 (EFRKAFLKILHC). Residue Cys-444 is the site of S-palmitoyl cysteine attachment.

The protein belongs to the G-protein coupled receptor 1 family. Forms homo- and heterooligomers with DRD4. The interaction with DRD4 may modulate agonist-induced downstream signaling. Interacts with CADPS and CADPS2. Interacts with GPRASP1, PPP1R9B and CLIC6. Interacts with ARRB2. Interacts with HTR2A. Interacts with DRD1. Interacts with KCNA2. Palmitoylated. Palmitoylation which is required for proper localization to the plasma membrane and stability of the receptor could be carried on by ZDHHC4, ZDHHC3 and ZDHHC8.

It localises to the cell membrane. Its subcellular location is the golgi apparatus membrane. Its function is as follows. Dopamine receptor whose activity is mediated by G proteins which inhibit adenylyl cyclase. Positively regulates postnatal regression of retinal hyaloid vessels via suppression of VEGFR2/KDR activity, downstream of OPN5. The sequence is that of D(2) dopamine receptor (DRD2) from Bos taurus (Bovine).